The following is a 205-amino-acid chain: GTP cyclohydrolase 1 (205 aa).

Residues Cys94, His97, and Cys165 each contribute to the Zn(2+) site.

It belongs to the GTP cyclohydrolase I family. As to quaternary structure, homomer.

It catalyses the reaction GTP + H2O = 7,8-dihydroneopterin 3'-triphosphate + formate + H(+). It functions in the pathway cofactor biosynthesis; 7,8-dihydroneopterin triphosphate biosynthesis; 7,8-dihydroneopterin triphosphate from GTP: step 1/1. This chain is GTP cyclohydrolase 1, found in Sinorhizobium fredii (strain NBRC 101917 / NGR234).